An 89-amino-acid polypeptide reads, in one-letter code: Large ribosomal subunit protein bL31B (89 aa).

Belongs to the bacterial ribosomal protein bL31 family. Type B subfamily. In terms of assembly, part of the 50S ribosomal subunit.

This chain is Large ribosomal subunit protein bL31B, found in Aeromonas salmonicida (strain A449).